The following is a 344-amino-acid chain: Hypoxia-inducible factor 1-alpha inhibitor (344 aa).

Alanine 2 is modified (N-acetylalanine). In terms of domain architecture, JmjC spans 133–303 (GRVYLQQTLN…PKRIEYPLKA (171 aa)). Tyrosine 136 provides a ligand contact to 2-oxoglutarate. Substrate is bound by residues aspartate 143 and 173 to 174 (LT). Residue threonine 187 participates in 2-oxoglutarate binding. Fe cation is bound by residues histidine 190 and aspartate 192. 192–194 (DEQ) serves as a coordination point for substrate. 2 residues coordinate 2-oxoglutarate: asparagine 196 and lysine 205. Residue 229 to 230 (RQ) coordinates substrate. Residue histidine 270 coordinates Fe cation. Asparagine 285 serves as a coordination point for 2-oxoglutarate. The substrate site is built by alanine 291 and asparagine 312.

As to quaternary structure, homodimer; homodimerization is essential for catalytic activity. Requires Fe(2+) as cofactor.

It is found in the nucleus. The protein resides in the cytoplasm. It localises to the perinuclear region. The enzyme catalyses L-asparaginyl-[hypoxia-inducible factor alpha subunit] + 2-oxoglutarate + O2 = (3S)-3-hydroxy-L-asparaginyl-[hypoxia-inducible factor alpha subunit] + succinate + CO2. It catalyses the reaction L-histidyl-[ankyrin-repeat domain protein] + 2-oxoglutarate + O2 = (3S)-3-hydroxy-L-histidyl-[ankyrin-repeat domain protein] + succinate + CO2. It carries out the reaction L-asparaginyl-[ankyrin-repeat domain protein] + 2-oxoglutarate + O2 = (3S)-3-hydroxy-L-asparaginyl-[ankyrin-repeat domain protein] + succinate + CO2. The catalysed reaction is L-aspartyl-[ankyrin-repeat domain protein] + 2-oxoglutarate + O2 = (3S)-3-hydroxy-L-aspartyl-[ankyrin-repeat domain protein] + succinate + CO2. In terms of biological role, hydroxylates a specific Asn residue in the C-terminal transactivation domain (CAD) of HIF-1 alpha. The hydroxylation prevents interaction of HIF-1 with transcriptional coactivators. Also hydroxylates specific Asn, Asp and His residues within ankyrin repeat domain-containing proteins. The chain is Hypoxia-inducible factor 1-alpha inhibitor (hif1an) from Danio rerio (Zebrafish).